We begin with the raw amino-acid sequence, 298 residues long: Thymidylate synthase (298 aa).

DUMP-binding positions include Arg25 and 159-160 (RR). The Nucleophile role is filled by Cys179. DUMP contacts are provided by residues 200 to 203 (RSVD), Asn211, and 241 to 243 (HLY). Asp203 serves as a coordination point for (6R)-5,10-methylene-5,6,7,8-tetrahydrofolate. Ala297 contacts (6R)-5,10-methylene-5,6,7,8-tetrahydrofolate.

This sequence belongs to the thymidylate synthase family. Bacterial-type ThyA subfamily. In terms of assembly, homodimer.

It localises to the cytoplasm. The enzyme catalyses dUMP + (6R)-5,10-methylene-5,6,7,8-tetrahydrofolate = 7,8-dihydrofolate + dTMP. It participates in pyrimidine metabolism; dTTP biosynthesis. Its function is as follows. Catalyzes the reductive methylation of 2'-deoxyuridine-5'-monophosphate (dUMP) to 2'-deoxythymidine-5'-monophosphate (dTMP) while utilizing 5,10-methylenetetrahydrofolate (mTHF) as the methyl donor and reductant in the reaction, yielding dihydrofolate (DHF) as a by-product. This enzymatic reaction provides an intracellular de novo source of dTMP, an essential precursor for DNA biosynthesis. The protein is Thymidylate synthase of Cereibacter sphaeroides (strain ATCC 17025 / ATH 2.4.3) (Rhodobacter sphaeroides).